Here is a 337-residue protein sequence, read N- to C-terminus: Lipoyl synthase (337 aa).

Positions 81, 86, 92, 107, 111, 114, and 323 each coordinate [4Fe-4S] cluster. The Radical SAM core domain maps to 93-312 (FSHGTATFMI…EDYGNALGFS (220 aa)).

Belongs to the radical SAM superfamily. Lipoyl synthase family. [4Fe-4S] cluster serves as cofactor.

It localises to the cytoplasm. It carries out the reaction [[Fe-S] cluster scaffold protein carrying a second [4Fe-4S](2+) cluster] + N(6)-octanoyl-L-lysyl-[protein] + 2 oxidized [2Fe-2S]-[ferredoxin] + 2 S-adenosyl-L-methionine + 4 H(+) = [[Fe-S] cluster scaffold protein] + N(6)-[(R)-dihydrolipoyl]-L-lysyl-[protein] + 4 Fe(3+) + 2 hydrogen sulfide + 2 5'-deoxyadenosine + 2 L-methionine + 2 reduced [2Fe-2S]-[ferredoxin]. It participates in protein modification; protein lipoylation via endogenous pathway; protein N(6)-(lipoyl)lysine from octanoyl-[acyl-carrier-protein]: step 2/2. Catalyzes the radical-mediated insertion of two sulfur atoms into the C-6 and C-8 positions of the octanoyl moiety bound to the lipoyl domains of lipoate-dependent enzymes, thereby converting the octanoylated domains into lipoylated derivatives. The sequence is that of Lipoyl synthase from Xanthomonas euvesicatoria pv. vesicatoria (strain 85-10) (Xanthomonas campestris pv. vesicatoria).